The chain runs to 446 residues: Glucarate dehydratase (446 aa).

Residues histidine 32, threonine 103, tyrosine 150, and lysine 205 each contribute to the substrate site. Residue lysine 207 is the Proton acceptor of the active site. Positions 235, 266, and 289 each coordinate Mg(2+). 235–237 (DPN) contributes to the substrate binding site. Residues asparagine 289, 339–341 (HSN), histidine 368, and arginine 422 contribute to the substrate site. Histidine 339 acts as the Proton acceptor in catalysis.

This sequence belongs to the mandelate racemase/muconate lactonizing enzyme family. GlucD subfamily. In terms of assembly, homodimer. Mg(2+) is required as a cofactor.

It carries out the reaction D-glucarate = 5-dehydro-4-deoxy-D-glucarate + H2O. The protein operates within carbohydrate acid metabolism; D-glucarate degradation; 2,5-dioxopentanoate from D-glucarate: step 1/2. Its function is as follows. Catalyzes the dehydration of glucarate to 5-keto-4-deoxy-D-glucarate (5-kdGluc). Also acts on L-idarate. This chain is Glucarate dehydratase (gudD), found in Escherichia coli O157:H7.